The following is a 352-amino-acid chain: Quinolinate synthase (352 aa).

Iminosuccinate-binding residues include H48 and S69. C114 lines the [4Fe-4S] cluster pocket. Residues 140-142 (YAN) and S157 each bind iminosuccinate. C201 is a binding site for [4Fe-4S] cluster. Iminosuccinate-binding positions include 227-229 (HPE) and T244. C298 is a [4Fe-4S] cluster binding site.

Belongs to the quinolinate synthase family. Type 1 subfamily. Requires [4Fe-4S] cluster as cofactor.

Its subcellular location is the cytoplasm. The catalysed reaction is iminosuccinate + dihydroxyacetone phosphate = quinolinate + phosphate + 2 H2O + H(+). The protein operates within cofactor biosynthesis; NAD(+) biosynthesis; quinolinate from iminoaspartate: step 1/1. Its function is as follows. Catalyzes the condensation of iminoaspartate with dihydroxyacetone phosphate to form quinolinate. This Pseudomonas fluorescens (strain Pf0-1) protein is Quinolinate synthase.